The following is a 94-amino-acid chain: Large ribosomal subunit protein uL23 (94 aa).

This sequence belongs to the universal ribosomal protein uL23 family. Part of the 50S ribosomal subunit. Contacts protein L29, and trigger factor when it is bound to the ribosome.

One of the early assembly proteins it binds 23S rRNA. One of the proteins that surrounds the polypeptide exit tunnel on the outside of the ribosome. Forms the main docking site for trigger factor binding to the ribosome. The polypeptide is Large ribosomal subunit protein uL23 (Listeria monocytogenes serotype 4b (strain CLIP80459)).